We begin with the raw amino-acid sequence, 63 residues long: Large ribosomal subunit protein bL32 (63 aa).

2 disordered regions span residues 1–25 (MAVPARKTSKQKKRSRRGHIKLTTP) and 42–63 (VSPKGFYKGRQVANENKQQNND). The span at 7–20 (KTSKQKKRSRRGHI) shows a compositional bias: basic residues. Residues 54–63 (ANENKQQNND) show a composition bias toward polar residues.

It belongs to the bacterial ribosomal protein bL32 family.

This chain is Large ribosomal subunit protein bL32, found in Lactobacillus johnsonii (strain CNCM I-12250 / La1 / NCC 533).